Consider the following 159-residue polypeptide: Nucleotide-binding protein PLES_47741 (159 aa).

This sequence belongs to the YajQ family.

Nucleotide-binding protein. The sequence is that of Nucleotide-binding protein PLES_47741 from Pseudomonas aeruginosa (strain LESB58).